A 123-amino-acid polypeptide reads, in one-letter code: Glutaredoxin-like protein (123 aa).

One can recognise a Glutaredoxin domain in the interval 27 to 123; the sequence is INEVEESITN…GTLFNDLKKK (97 aa).

The protein belongs to the glutaredoxin family.

The protein is Glutaredoxin-like protein (grxB) of Dictyostelium discoideum (Social amoeba).